A 38-amino-acid polypeptide reads, in one-letter code: Large ribosomal subunit protein bL36 (38 aa).

This sequence belongs to the bacterial ribosomal protein bL36 family.

The sequence is that of Large ribosomal subunit protein bL36 from Cupriavidus metallidurans (strain ATCC 43123 / DSM 2839 / NBRC 102507 / CH34) (Ralstonia metallidurans).